The following is a 359-amino-acid chain: CMP-N-acetylneuraminate-poly-alpha-2,8-sialyltransferase (359 aa).

Over 1 to 7 the chain is Cytoplasmic; sequence MRSIRKR. The chain crosses the membrane as a helical; Signal-anchor for type II membrane protein span at residues 8-20; that stretch reads WTICTISLLLIFY. Over 21–359 the chain is Lumenal; the sequence is KTKEIARTEE…KLTTGKCMKQ (339 aa). Asn-50, Asn-74, and Asn-119 each carry an N-linked (GlcNAc...) asparagine glycan. 2 disulfides stabilise this stretch: Cys-142–Cys-292 and Cys-156–Cys-356. Residues Asn-147 and Asn-170 each coordinate CMP-N-acetyl-beta-neuraminate. Residues Asn-204 and Asn-219 are each glycosylated (N-linked (GlcNAc...) asparagine). Ser-279, Thr-280, Gly-281, and Trp-301 together coordinate CMP-N-acetyl-beta-neuraminate. His-331 functions as the Proton donor/acceptor in the catalytic mechanism.

Belongs to the glycosyltransferase 29 family. Autopolysialylated.

The protein localises to the golgi apparatus membrane. It localises to the secreted. The catalysed reaction is [N-acetyl-alpha-D-neuraminosyl-(2-&gt;8)](n) + CMP-N-acetyl-beta-neuraminate = [N-acetyl-alpha-D-neuraminosyl-(2-&gt;8)](n+1) + CMP + H(+). It functions in the pathway protein modification; protein glycosylation. Functionally, catalyzes the transfer of a sialic acid from a CMP-linked sialic acid donor onto a terminal alpha-2,3-, alpha-2,6-, or alpha-2,8-linked sialic acid of an N-linked glycan protein acceptor through alpha-2,8-linkages. Therefore, participates in polysialic acid synthesis on various sialylated N-acetyllactosaminyl oligosaccharides, including NCAM1 N-glycans, FETUB N-glycans and AHSG. It is noteworthy that alpha-2,3-linked sialic acid is apparently a better acceptor than alpha-2,6-linked sialic acid. This Cricetulus griseus (Chinese hamster) protein is CMP-N-acetylneuraminate-poly-alpha-2,8-sialyltransferase.